Reading from the N-terminus, the 355-residue chain is D-alanine--D-alanine ligase (355 aa).

The ATP-grasp domain maps to 143–350 (KTIFSNHKLP…IEQLVAKLVD (208 aa)). ATP is bound at residue 178–233 (LKKLKFPVFVKPSNSGSSLGISKVKNESEILLALEKAWGIDPRILIEEGLEVREIE). 3 residues coordinate Mg(2+): aspartate 303, glutamate 317, and asparagine 319.

This sequence belongs to the D-alanine--D-alanine ligase family. It depends on Mg(2+) as a cofactor. The cofactor is Mn(2+).

The protein localises to the cytoplasm. It carries out the reaction 2 D-alanine + ATP = D-alanyl-D-alanine + ADP + phosphate + H(+). It participates in cell wall biogenesis; peptidoglycan biosynthesis. Functionally, cell wall formation. The protein is D-alanine--D-alanine ligase of Prochlorococcus marinus (strain MIT 9301).